We begin with the raw amino-acid sequence, 1091 residues long: MSAKAISEQTGKELLYKYICTTSAIQNRFKYARVTPDTDWAHLLQDHPWLLSQSLVVKPDQLIKRRGKLGLVGVNLSLDGVKSWLKPRLGHEATVGKAKGFLKNFLIEPFVPHSQAEEFYVCIYATREGDYVLFHHEGGVDVGDVDAKAQKLLVGVDEKLNTEDIKRHLLVHAPEDKKEVLASFISGLFNFYEDLYFTYLEINPLVVTKDGVYILDLAAKVDATADYICKVKWGDIEFPPPFGREAYPEEAYIADLDAKSGASLKLTLLNPKGRIWTMVAGGGASVVYSDTICDLGGVNELANYGEYSGAPSEQQTYDYAKTILSLMTREKHPEGKILIIGGSIANFTNVAATFKGIVRAIRDYQGPLKEHEVTIFVRRGGPNYQEGLRVMGEVGKTTGIPIHVFGTETHMTAIVGMALGHRPIPNQPPTAAHTANFLLNASGSTSTPAPSRTASFSESRADEVAPAKKAKPAMPQGKSATLFSRHTKAIVWGMQTRAVQGMLDFDYVCSRDEPSVAAMVYPFTGDHKQKFYWGHKEILIPVFKNMADAMKKHPEVDVLINFASLRSAYDSTMETMNYAQIRTIAIIAEGIPEALTRKLIKKADQKGVTIIGPATVGGIKPGCFKIGNTGGMLDNILASKLYRPGSVAYVSRSGGMSNELNNIISRTTDGVYEGVAIGGDRYPGSTFMDHVLRYQDTPGVKMIVVLGEIGGTEEYKICRGIKEGRLTKPVVCWCIGTCATMFSSEVQFGHAGACANQASETAVAKNQALKEAGVFVPRSFDELGEIIQSVYEDLVAKGAIVPAQEVPPPTVPMDYSWARELGLIRKPASFMTSICDERGQELIYAGMPITEVFKEEMGIGGVLGLLWFQRRLPKYSCQFIEMCLMVTADHGPAVSGAHNTIICARAGKDLVSSLTSGLLTIGDRFGGALDAAAKMFSKAFDSGIIPMEFVNKMKKEGKLIMGIGHRVKSINNPDMRVQILKDFVKQHFPATPLLDYALEVEKITTSKKPNLILNVDGFIGVAFVDMLRNCGSFTREEADEYVDIGALNGIFVLGRSMGFIGHYLDQKRLKQGLYRHPWDDISYVLPEHMSM.

Positions 4 to 265 (KAISEQTGKE…LDAKSGASLK (262 aa)) constitute an ATP-grasp domain. 6 residues coordinate ATP: lysine 58, arginine 66, glycine 67, proline 109, valine 111, and glutamate 118. A Phosphotyrosine modification is found at tyrosine 131. Aspartate 216 is an ATP binding site. Mg(2+) is bound by residues aspartate 257, serine 260, and alanine 262. Serine 263 carries the phosphoserine modification. The citrate site is built by glycine 309, asparagine 346, threonine 348, tyrosine 364, and arginine 379. A compositionally biased stretch (low complexity) spans 442–457 (SGSTSTPAPSRTASFS). Positions 442 to 478 (SGSTSTPAPSRTASFSESRADEVAPAKKAKPAMPQGK) are disordered. Threonine 447 is subject to Phosphothreonine. Serine 451 is modified (phosphoserine). At serine 455 the chain carries Phosphoserine; by PKA and PKB/AKT1 or PKB/AKT2 or BCKDK. A Phosphoserine modification is found at serine 459. N6-acetyllysine; alternate occurs at positions 530, 536, and 544. Residues lysine 530, lysine 536, and lysine 544 each participate in a glycyl lysine isopeptide (Lys-Gly) (interchain with G-Cter in ubiquitin); alternate cross-link. Threonine 629 carries the phosphothreonine modification. At serine 653 the chain carries Phosphoserine. A Phosphotyrosine modification is found at tyrosine 672. The active-site Tele-phosphohistidine intermediate is the histidine 750. CoA is bound at residue 769 to 779 (LKEAGVFVPRS). A Phosphoserine modification is found at serine 829. Lysine 938, lysine 958, lysine 968, and lysine 1067 each carry N6-acetyllysine. At serine 1090 the chain carries Phosphoserine.

It in the N-terminal section; belongs to the succinate/malate CoA ligase beta subunit family. The protein in the C-terminal section; belongs to the succinate/malate CoA ligase alpha subunit family. In terms of assembly, homotetramer. It depends on Mg(2+) as a cofactor. Post-translationally, phosphorylated by PKA and GSK3 in a sequential manner; phosphorylation results in activation of its activity. Phosphorylation on Thr-447 and Ser-451 depends on the phosphorylation state of Ser-455. Phosphorylation on Ser-455 is decreased by prior phosphorylation on the other 2 residues. Phosphorylated at Ser-455 by BCKDK and dephosphorylated by protein phosphatase PPM1K. ISGylated. In terms of processing, acetylated at Lys-530, Lys-536 and Lys-544 by KAT2B/PCAF. Acetylation is promoted by glucose and stabilizes the protein, probably by preventing ubiquitination at the same sites. Acetylation promotes de novo lipid synthesis. Deacetylated by SIRT2. Post-translationally, ubiquitinated at Lys-530, Lys-536 and Lys-544 by the BCR(KLHL25) E3 ubiquitin ligase complex and UBR4, leading to its degradation. Ubiquitination is probably inhibited by acetylation at same site. BCR(KLHL25)-mediated degradation of ACLY promotes fatty acid oxidation and is required for differentiation of inducible regulatory T (iTreg) cells.

Its subcellular location is the cytoplasm. It is found in the cytosol. It carries out the reaction oxaloacetate + acetyl-CoA + ADP + phosphate = citrate + ATP + CoA. Phosphorylation results in activation of its activity. Glucose 6-phosphate, fructose 6-phosphate, fructose 2,6-bisphosphate, ribulose 5-phosphate, and fructose 1,6-bisphosphate also act as activators. Catalyzes the cleavage of citrate into oxaloacetate and acetyl-CoA, the latter serving as common substrate in multiple biochemical reactions in protein, carbohydrate and lipid metabolism. The polypeptide is ATP-citrate synthase (Acly) (Mus musculus (Mouse)).